A 717-amino-acid chain; its full sequence is Probable cyclic nucleotide-gated ion channel 5 (717 aa).

The Cytoplasmic segment spans residues 1–102; the sequence is MAGKRENFVR…DKFLLYCNKL (102 aa). The chain crosses the membrane as a helical span at residues 103 to 123; that stretch reads FVASCILSVFVDPFFFYLPVI. Over 124–136 the chain is Extracellular; that stretch reads NAESKCLGIDRKL. The chain crosses the membrane as a helical span at residues 137 to 157; the sequence is AITASTLRTFIDVFYLAHMAL. At 158–190 the chain is on the cytoplasmic side; the sequence is QLRTAYIAPSSRVFGRGELVIDPAQIAKRYLQR. The chain crosses the membrane as a helical span at residues 191 to 211; the sequence is WFIIDFLSVLPLPQIVVWRFL. The Extracellular portion of the chain corresponds to 212 to 224; it reads QSSNGSDVLATKQ. Residues 225–245 form a helical membrane-spanning segment; it reads ALLFIVLVQYIPRFLRVLPLT. Residues 246 to 265 lie on the Cytoplasmic side of the membrane; sequence SELKRTAGVFAETAWAGAAY. Residues 266–286 form a helical membrane-spanning segment; it reads YLLLYMLASHIVGAFWYLLAL. Residues 287–391 lie on the Extracellular side of the membrane; sequence ERNDACWQEA…GQGLETSTYP (105 aa). A helical membrane pass occupies residues 392–412; the sequence is MEIIFSISLAISGLILFALLI. The Cytoplasmic portion of the chain corresponds to 413-717; that stretch reads GNMQTYLQSL…KPPEPDFTAD (305 aa). A nucleoside 3',5'-cyclic phosphate is bound by residues 498–628 and Glu569; that span reads LFKS…TFRF. Residues 614 to 629 are calmodulin-binding; it reads FRRLHSRQVQHTFRFY. The IQ domain maps to 634–663; it reads RTWAACFIQAAWRRYCKRKKMEEAEAEAAA.

Belongs to the cyclic nucleotide-gated cation channel (TC 1.A.1.5) family. Homotetramer or heterotetramer.

The protein localises to the cell membrane. Its function is as follows. Probable cyclic nucleotide-gated ion channel. The polypeptide is Probable cyclic nucleotide-gated ion channel 5 (CNGC5) (Arabidopsis thaliana (Mouse-ear cress)).